Here is a 515-residue protein sequence, read N- to C-terminus: Slowpoke-binding protein (515 aa).

The tract at residues 1–31 (MFKFNKAAQQQRIDNRNSAVTGHDPFVRPPV) is disordered. The span at 7-20 (AAQQQRIDNRNSAV) shows a compositional bias: polar residues. Phosphoserine occurs at positions 54 and 79. Residues 73 to 82 (SSNRSASSEQ) are compositionally biased toward polar residues. The interval 73–94 (SSNRSASSEQDNSDLSEHSEKS) is disordered. An interaction with Slo region spans residues 191–203 (NWFLVTDASVRTD). Residues 483-503 (SLSEANSPCTPPSTPHDRRTG) are disordered.

In terms of assembly, interacts specifically with Slo; which activates Slo activity. Interacts with 14-3-3-zeta when phosphorylated. Forms a heterotetrameric complex containing phosphorylated Slob, Slo and 14-3-3-zeta, which represses Slo activity due to the indirect interaction between Slo and 14-3-3-zeta. In terms of processing, phosphorylated. Phosphorylation of Ser-54 and Ser-79 is required for the interaction with 14-3-3-zeta but not with that of Slo. Expressed in head. In larval brain, it is expressed in the mushroom body. Also expressed in larval muscles.

It is found in the cytoplasm. Functionally, regulator of calcium-activated channel Slo. Increases or decreases the voltage sensitivity of Slo, depending on the absence or presence of 14-3-3-zeta in the complex, respectively. The sequence is that of Slowpoke-binding protein (Slob) from Drosophila melanogaster (Fruit fly).